The following is a 578-amino-acid chain: NADH-quinone oxidoreductase subunit C/D (578 aa).

The NADH dehydrogenase I subunit C stretch occupies residues 1–167 (MILSLFKLFG…DEFYFTKQKE (167 aa)). The NADH dehydrogenase I subunit D stretch occupies residues 192-578 (EYMFLNFGPN…IDFVMSDVDR (387 aa)).

This sequence in the N-terminal section; belongs to the complex I 30 kDa subunit family. In the C-terminal section; belongs to the complex I 49 kDa subunit family. NDH-1 is composed of 13 different subunits. Subunits NuoB, CD, E, F, and G constitute the peripheral sector of the complex.

It localises to the cell inner membrane. It catalyses the reaction a quinone + NADH + 5 H(+)(in) = a quinol + NAD(+) + 4 H(+)(out). In terms of biological role, NDH-1 shuttles electrons from NADH, via FMN and iron-sulfur (Fe-S) centers, to quinones in the respiratory chain. The immediate electron acceptor for the enzyme in this species is believed to be ubiquinone. Couples the redox reaction to proton translocation (for every two electrons transferred, four hydrogen ions are translocated across the cytoplasmic membrane), and thus conserves the redox energy in a proton gradient. The protein is NADH-quinone oxidoreductase subunit C/D of Buchnera aphidicola subsp. Cinara cedri (strain Cc).